A 416-amino-acid polypeptide reads, in one-letter code: Glutamyl-tRNA reductase (416 aa).

Substrate-binding positions include Thr-49 to Arg-52, Ser-105, Glu-110 to Gln-112, and Gln-116. Cys-50 (nucleophile) is an active-site residue. NADP(+) is bound at residue Gly-185–Ile-190.

The protein belongs to the glutamyl-tRNA reductase family. In terms of assembly, homodimer.

The enzyme catalyses (S)-4-amino-5-oxopentanoate + tRNA(Glu) + NADP(+) = L-glutamyl-tRNA(Glu) + NADPH + H(+). It participates in porphyrin-containing compound metabolism; protoporphyrin-IX biosynthesis; 5-aminolevulinate from L-glutamyl-tRNA(Glu): step 1/2. In terms of biological role, catalyzes the NADPH-dependent reduction of glutamyl-tRNA(Glu) to glutamate 1-semialdehyde (GSA). This is Glutamyl-tRNA reductase from Shewanella pealeana (strain ATCC 700345 / ANG-SQ1).